The following is a 337-amino-acid chain: Putative high mobility group B protein 11 (337 aa).

The ARID domain maps to 34–125 (VRNPELFWEM…MLFEFEHLYY (92 aa)). Disordered stretches follow at residues 197 to 221 (TKRG…QRTG) and 298 to 337 (AGTS…EVSQ). The segment at residues 215–282 (PKRQRTGYNF…RYKMEILQYR (68 aa)) is a DNA-binding region (HMG box). The segment covering 319 to 329 (TDACTSASSAA) has biased composition (low complexity).

This sequence belongs to the HMGB family.

The protein localises to the nucleus. Binds preferentially DNA with A/T-rich content. The sequence is that of Putative high mobility group B protein 11 (HMGB11) from Arabidopsis thaliana (Mouse-ear cress).